Here is a 78-residue protein sequence, read N- to C-terminus: Acyl carrier protein (78 aa).

In terms of domain architecture, Carrier spans 2 to 77 (SDTADRVQKI…DATKYIEEHK (76 aa)). An O-(pantetheine 4'-phosphoryl)serine modification is found at serine 37.

This sequence belongs to the acyl carrier protein (ACP) family. 4'-phosphopantetheine is transferred from CoA to a specific serine of apo-ACP by AcpS. This modification is essential for activity because fatty acids are bound in thioester linkage to the sulfhydryl of the prosthetic group.

The protein localises to the cytoplasm. It participates in lipid metabolism; fatty acid biosynthesis. Functionally, carrier of the growing fatty acid chain in fatty acid biosynthesis. This Erythrobacter litoralis (strain HTCC2594) protein is Acyl carrier protein.